The chain runs to 456 residues: Histidine--tRNA ligase (456 aa).

A disordered region spans residues 1 to 20 (MTQSENVAAAGGAKTEPKVR).

The protein belongs to the class-II aminoacyl-tRNA synthetase family. Homodimer.

The protein resides in the cytoplasm. The enzyme catalyses tRNA(His) + L-histidine + ATP = L-histidyl-tRNA(His) + AMP + diphosphate + H(+). This chain is Histidine--tRNA ligase, found in Cupriavidus necator (strain ATCC 17699 / DSM 428 / KCTC 22496 / NCIMB 10442 / H16 / Stanier 337) (Ralstonia eutropha).